The primary structure comprises 542 residues: NAD-dependent deacetylase sir2D (542 aa).

2 disordered regions span residues 1–37 and 136–160; these read MNKR…NTPL and ETST…TTTT. The segment covering 8 to 25 has biased composition (low complexity); that stretch reads NNELNEIQNNQNKNNNNK. Positions 165–193 form a coiled coil; the sequence is NETILLDILNNNKDEVDDEIQRIGNNVGN. A Deacetylase sirtuin-type domain is found at 283–542; it reads ATLDLSTFEK…VQDLLNKVKW (260 aa). The active-site Proton acceptor is the H411. C419, C422, C443, and C446 together coordinate Zn(2+).

The protein belongs to the sirtuin family. Zn(2+) serves as cofactor.

The catalysed reaction is N(6)-acetyl-L-lysyl-[protein] + NAD(+) + H2O = 2''-O-acetyl-ADP-D-ribose + nicotinamide + L-lysyl-[protein]. NAD-dependent deacetylase, which plays an important role in the regulation of transcriptional repression. This is NAD-dependent deacetylase sir2D (sir2D) from Dictyostelium discoideum (Social amoeba).